The following is a 321-amino-acid chain: MQGGQEVGRESVSDLAEEPGEGSPHQTARGQSGDGLERRRICCDGPVVLPDTNANSSRLDEGLPTSCPHPGELSGGWGEFEGFRESSAKSEQFSQSFELLGRATECQPLRTPSVPEEGSSCQVQQGGPWVTGTAAGPSSESIPSYEKVFRLAFQEVAVEQAPEDVCSLDHFLERSNEGAASVPRLCSESRKLWRALQNTDTASASRCLWGESHCRENLLPVLGVDAAQKSPPGGQGHVLEGSDLRKPEELLAVSGFHLHHCKALIQTKLSGTSSSRQGSLITYSLFLKTPLQGNGRYITIPQKKIFTPRNLKMAFFNNDVC.

Positions 1 to 80 (MQGGQEVGRE…GELSGGWGEF (80 aa)) are disordered.

This is an uncharacterized protein from Mus musculus (Mouse).